The sequence spans 249 residues: Putative protein SNX29P2 (249 aa).

Disordered stretches follow at residues 109 to 171 (QVTN…SNSW) and 188 to 249 (DVKS…PGFK). Over residues 156–170 (SPFGPNSNGSQSSNS) the composition is skewed to low complexity. Residues 193 to 204 (DDEDVDENEDDV) are compositionally biased toward acidic residues. Residues 226-242 (HSVTQAGVQWHDLSSLQ) show a composition bias toward polar residues.

This sequence belongs to the sorting nexin family.

This Homo sapiens (Human) protein is Putative protein SNX29P2 (SNX29P2).